The sequence spans 385 residues: Glutamate 5-kinase (385 aa).

Residue K18 participates in ATP binding. Substrate contacts are provided by S57, D144, and N156. Position 218-224 (218-224) interacts with ATP; it reads TGGMKSK. Residues 283–361 form the PUA domain; that stretch reads RGVLSIDAGA…SRIEQVLGHK (79 aa).

This sequence belongs to the glutamate 5-kinase family.

Its subcellular location is the cytoplasm. It catalyses the reaction L-glutamate + ATP = L-glutamyl 5-phosphate + ADP. The protein operates within amino-acid biosynthesis; L-proline biosynthesis; L-glutamate 5-semialdehyde from L-glutamate: step 1/2. Its function is as follows. Catalyzes the transfer of a phosphate group to glutamate to form L-glutamate 5-phosphate. This chain is Glutamate 5-kinase, found in Syntrophus aciditrophicus (strain SB).